A 332-amino-acid chain; its full sequence is Ketol-acid reductoisomerase (NADP(+)) (332 aa).

The 182-residue stretch at methionine 1–threonine 182 folds into the KARI N-terminal Rossmann domain. Residues tyrosine 25–glutamine 28 and aspartate 83–glutamine 86 each bind NADP(+). The active site involves histidine 108. Glycine 134 lines the NADP(+) pocket. Positions threonine 183–leucine 328 constitute a KARI C-terminal knotted domain. Aspartate 191, glutamate 195, glutamate 227, and glutamate 231 together coordinate Mg(2+). Serine 252 contacts substrate.

The protein belongs to the ketol-acid reductoisomerase family. Mg(2+) serves as cofactor.

The catalysed reaction is (2R)-2,3-dihydroxy-3-methylbutanoate + NADP(+) = (2S)-2-acetolactate + NADPH + H(+). It carries out the reaction (2R,3R)-2,3-dihydroxy-3-methylpentanoate + NADP(+) = (S)-2-ethyl-2-hydroxy-3-oxobutanoate + NADPH + H(+). Its pathway is amino-acid biosynthesis; L-isoleucine biosynthesis; L-isoleucine from 2-oxobutanoate: step 2/4. It participates in amino-acid biosynthesis; L-valine biosynthesis; L-valine from pyruvate: step 2/4. In terms of biological role, involved in the biosynthesis of branched-chain amino acids (BCAA). Catalyzes an alkyl-migration followed by a ketol-acid reduction of (S)-2-acetolactate (S2AL) to yield (R)-2,3-dihydroxy-isovalerate. In the isomerase reaction, S2AL is rearranged via a Mg-dependent methyl migration to produce 3-hydroxy-3-methyl-2-ketobutyrate (HMKB). In the reductase reaction, this 2-ketoacid undergoes a metal-dependent reduction by NADPH to yield (R)-2,3-dihydroxy-isovalerate. This Dehalococcoides mccartyi (strain ATCC BAA-2100 / JCM 16839 / KCTC 5957 / BAV1) protein is Ketol-acid reductoisomerase (NADP(+)).